Reading from the N-terminus, the 193-residue chain is 3-isopropylmalate dehydratase small subunit (193 aa).

It belongs to the LeuD family. LeuD type 1 subfamily. Heterodimer of LeuC and LeuD.

It catalyses the reaction (2R,3S)-3-isopropylmalate = (2S)-2-isopropylmalate. Its pathway is amino-acid biosynthesis; L-leucine biosynthesis; L-leucine from 3-methyl-2-oxobutanoate: step 2/4. Catalyzes the isomerization between 2-isopropylmalate and 3-isopropylmalate, via the formation of 2-isopropylmaleate. The protein is 3-isopropylmalate dehydratase small subunit of Bacillus cereus (strain ZK / E33L).